The primary structure comprises 196 residues: Endoribonuclease YbeY (196 aa).

Residues histidine 120, histidine 124, and histidine 130 each contribute to the Zn(2+) site.

The protein belongs to the endoribonuclease YbeY family. Requires Zn(2+) as cofactor.

The protein resides in the cytoplasm. Single strand-specific metallo-endoribonuclease involved in late-stage 70S ribosome quality control and in maturation of the 3' terminus of the 16S rRNA. The chain is Endoribonuclease YbeY from Corynebacterium glutamicum (strain ATCC 13032 / DSM 20300 / JCM 1318 / BCRC 11384 / CCUG 27702 / LMG 3730 / NBRC 12168 / NCIMB 10025 / NRRL B-2784 / 534).